An 862-amino-acid polypeptide reads, in one-letter code: Rab GTPase-binding effector protein 1 (862 aa).

An N-acetylalanine modification is found at Ala2. A coiled-coil region spans residues 11-345; sequence DVSLQQRVAE…KKADVEEEIK (335 aa). An N6-acetyllysine modification is found at Lys282. The segment at 315-338 is disordered; it reads ELKKKDQEDDEQQRLNKRKDHKKA. Residues Ser374, Ser377, and Ser407 each carry the phosphoserine modification. Phosphothreonine is present on Thr408. Phosphoserine is present on Ser410. The interaction with AP1G1, AP1G2, GGA1, GGA2 and GGA3 stretch occupies residues 435–447; sequence DESDFGPLVGADS. The stretch at 534–816 forms a coiled coil; sequence DMCSNYEKQL…LQTELDVSEQ (283 aa).

This sequence belongs to the rabaptin family. In terms of assembly, homodimer when bound to RAB5A. Heterodimer with RABGEF1. The heterodimer binds RAB4A and RAB5A that have been activated by GTP-binding. Interacts with TSC2. Interacts with GGA1 (via GAE domain), GGA2 (via GAE domain) and GGA3 (via GAE domain). Interacts with AP1G1 (via GAE domain). Interacts with AP1G2 (via GAE domain). Interacts with ECPAS. Interacts with KCNH1. Interacts with PKD1 (via C-terminal domain) and GGA1; the interactions recruit PKD1:PKD2 complex to GGA1 and ARL3 at trans-Golgi network. Proteolytic cleavage by caspases in apoptotic cells causes loss of endosome fusion activity.

It is found in the cytoplasm. It localises to the early endosome. The protein resides in the recycling endosome. The protein localises to the cytoplasmic vesicle. Its function is as follows. Rab effector protein acting as linker between gamma-adaptin, RAB4A and RAB5A. Involved in endocytic membrane fusion and membrane trafficking of recycling endosomes. Involved in KCNH1 channels trafficking to and from the cell membrane. Stimulates RABGEF1 mediated nucleotide exchange on RAB5A. Mediates the traffic of PKD1:PKD2 complex from the endoplasmic reticulum through the Golgi to the cilium. This Homo sapiens (Human) protein is Rab GTPase-binding effector protein 1 (RABEP1).